A 393-amino-acid chain; its full sequence is Sulfate adenylyltransferase (393 aa).

Belongs to the sulfate adenylyltransferase family.

It carries out the reaction sulfate + ATP + H(+) = adenosine 5'-phosphosulfate + diphosphate. Its pathway is sulfur metabolism; hydrogen sulfide biosynthesis; sulfite from sulfate: step 1/3. This Synechococcus sp. (strain JA-3-3Ab) (Cyanobacteria bacterium Yellowstone A-Prime) protein is Sulfate adenylyltransferase.